The primary structure comprises 292 residues: NAD kinase (292 aa).

D73 (proton acceptor) is an active-site residue. NAD(+)-binding positions include D73–G74, N147–E148, H158, R175, D177, T188–S193, and Q247.

The protein belongs to the NAD kinase family. Requires a divalent metal cation as cofactor.

The protein resides in the cytoplasm. It catalyses the reaction NAD(+) + ATP = ADP + NADP(+) + H(+). Functionally, involved in the regulation of the intracellular balance of NAD and NADP, and is a key enzyme in the biosynthesis of NADP. Catalyzes specifically the phosphorylation on 2'-hydroxyl of the adenosine moiety of NAD to yield NADP. The sequence is that of NAD kinase from Escherichia coli O7:K1 (strain IAI39 / ExPEC).